The following is a 293-amino-acid chain: 4-diphosphocytidyl-2-C-methyl-D-erythritol kinase (293 aa).

Residue Lys-11 is part of the active site. ATP is bound at residue 96-106 (PVAAGLGGGSS). The active site involves Asp-138.

It belongs to the GHMP kinase family. IspE subfamily.

The enzyme catalyses 4-CDP-2-C-methyl-D-erythritol + ATP = 4-CDP-2-C-methyl-D-erythritol 2-phosphate + ADP + H(+). The protein operates within isoprenoid biosynthesis; isopentenyl diphosphate biosynthesis via DXP pathway; isopentenyl diphosphate from 1-deoxy-D-xylulose 5-phosphate: step 3/6. Functionally, catalyzes the phosphorylation of the position 2 hydroxy group of 4-diphosphocytidyl-2C-methyl-D-erythritol. This chain is 4-diphosphocytidyl-2-C-methyl-D-erythritol kinase, found in Xanthobacter autotrophicus (strain ATCC BAA-1158 / Py2).